The primary structure comprises 188 residues: Protease-associated domain-containing protein 1 (188 aa).

An N-terminal signal peptide occupies residues 1 to 21; the sequence is MSRGAAGWCCLVLWLPTCVAA. One can recognise a PA domain in the interval 83–163; the sequence is IQDQIALVER…RSLEQHGLPW (81 aa). Residues Asn-121 and Asn-171 are each glycosylated (N-linked (GlcNAc...) asparagine).

N-glycosylated; required for efficient secretion. In terms of tissue distribution, expressed in metabolically active tissues such as liver, muscle, adipose, and heart and different brain regions like cortex and hypothalamus, expression is acutely regulated by the nutritional state.

It localises to the secreted. Its function is as follows. Plays a role in the modulation of physical activity and adiposity. This is Protease-associated domain-containing protein 1 from Mus musculus (Mouse).